The primary structure comprises 137 residues: ATP synthase epsilon chain (137 aa).

This sequence belongs to the ATPase epsilon chain family. As to quaternary structure, F-type ATPases have 2 components, CF(1) - the catalytic core - and CF(0) - the membrane proton channel. CF(1) has five subunits: alpha(3), beta(3), gamma(1), delta(1), epsilon(1). CF(0) has three main subunits: a, b and c.

It localises to the cell membrane. In terms of biological role, produces ATP from ADP in the presence of a proton gradient across the membrane. This chain is ATP synthase epsilon chain, found in Caldicellulosiruptor saccharolyticus (strain ATCC 43494 / DSM 8903 / Tp8T 6331).